The primary structure comprises 1112 residues: Cytosolic carboxypeptidase 4 (1112 aa).

The disordered stretch occupies residues 291 to 345; sequence TTEPPHDLPEEDFEDDGDDEVDKDSDTEDGKVEDDDLETDVNKLSSKPGLDRPEE. Positions 299 to 329 are enriched in acidic residues; it reads PEEDFEDDGDDEVDKDSDTEDGKVEDDDLET. The 291-residue stretch at 732 to 1022 folds into the Peptidase M14 domain; that stretch reads YPYTYTALMT…HPVDGLQGLQ (291 aa). Zn(2+) contacts are provided by H804, E807, and H901. E986 serves as the catalytic Proton donor/acceptor.

This sequence belongs to the peptidase M14 family. Interacts with MYLK. Interacts with TCF4. Requires Zn(2+) as cofactor. In terms of tissue distribution, expressed in corneal endothelium.

Its subcellular location is the cytoplasm. It localises to the cytosol. It carries out the reaction (L-glutamyl)(n+1)-gamma-L-glutamyl-L-glutamyl-[protein] + H2O = (L-glutamyl)(n)-gamma-L-glutamyl-L-glutamyl-[protein] + L-glutamate. The catalysed reaction is C-terminal L-alpha-aminoacyl-L-glutamyl-L-glutamyl-[tubulin] + H2O = C-terminal L-alpha-aminoacyl-L-glutamyl-[tubulin] + L-glutamate. Functionally, metallocarboxypeptidase that mediates deglutamylation of tubulin and non-tubulin target proteins. Catalyzes the removal of polyglutamate side chains present on the gamma-carboxyl group of glutamate residues within the C-terminal tail of tubulin protein. Specifically cleaves tubulin long-side-chains, while it is not able to remove the branching point glutamate. Also catalyzes the removal of polyglutamate residues from the carboxy-terminus of non-tubulin proteins such as MYLK. The protein is Cytosolic carboxypeptidase 4 of Homo sapiens (Human).